The following is a 312-amino-acid chain: Calcium-independent mitochondrial carrier protein SCaMC-3L (312 aa).

Solcar repeat units lie at residues 27 to 113 (GTLW…SKNF), 121 to 206 (QLFQ…LQCL), and 217 to 304 (PSGL…MKKT). Transmembrane regions (helical) follow at residues 33–50 (LLSG…TAPL), 88–107 (GNGI…FSVC), 131–144 (SLAV…INPM), 182–200 (YLPN…LAVY), 219–243 (GLVS…LTLV), and 279–298 (GMTP…YLVY).

This sequence belongs to the mitochondrial carrier (TC 2.A.29) family. Mainly expressed in testis and at lesser levels in brain.

The protein resides in the mitochondrion inner membrane. It catalyses the reaction Mg(2+)(out) + phosphate(in) + ATP(out) = Mg(2+)(in) + phosphate(out) + ATP(in). The catalysed reaction is ADP(out) + phosphate(in) + H(+)(out) = ADP(in) + phosphate(out) + H(+)(in). In terms of biological role, calcium-independent ATP-Mg/Pi exchanger that catalyzes the electroneutral exchange of Mg-ATP or free ADP against an hydrogenphosphate and participates in the net transport of adenine nucleotides across the mitochondria inner membrane. The protein is Calcium-independent mitochondrial carrier protein SCaMC-3L of Mus musculus (Mouse).